Reading from the N-terminus, the 81-residue chain is Photosystem I iron-sulfur center (81 aa).

4Fe-4S ferredoxin-type domains lie at 2 to 31 (SHFV…MIPW) and 39 to 68 (IASA…VRVY). [4Fe-4S] cluster-binding residues include Cys-11, Cys-14, Cys-17, Cys-21, Cys-48, Cys-51, Cys-54, and Cys-58.

In terms of assembly, the eukaryotic PSI reaction center is composed of at least 11 subunits. Requires [4Fe-4S] cluster as cofactor.

The protein localises to the plastid thylakoid membrane. It carries out the reaction reduced [plastocyanin] + hnu + oxidized [2Fe-2S]-[ferredoxin] = oxidized [plastocyanin] + reduced [2Fe-2S]-[ferredoxin]. Apoprotein for the two 4Fe-4S centers FA and FB of photosystem I (PSI); essential for photochemical activity. FB is the terminal electron acceptor of PSI, donating electrons to ferredoxin. The C-terminus interacts with PsaA/B/D and helps assemble the protein into the PSI complex. Required for binding of PsaD and PsaE to PSI. PSI is a plastocyanin-ferredoxin oxidoreductase, converting photonic excitation into a charge separation, which transfers an electron from the donor P700 chlorophyll pair to the spectroscopically characterized acceptors A0, A1, FX, FA and FB in turn. The chain is Photosystem I iron-sulfur center from Cuscuta exaltata (Tall dodder).